Here is a 466-residue protein sequence, read N- to C-terminus: Sucrose-6-phosphate hydrolase (466 aa).

Substrate contacts are provided by residues 38 to 41 (LLND), Q57, 100 to 101 (YS), 159 to 160 (RD), and E218. The active site involves D41.

Its subcellular location is the cytoplasm. The enzyme catalyses Hydrolysis of terminal non-reducing beta-D-fructofuranoside residues in beta-D-fructofuranosides.. Its pathway is glycan biosynthesis; sucrose metabolism. In terms of biological role, hydrolyzes sucrose and sucrose-6P, but fails to hydrolyze any of the phosphorylated isomers of sucrose and other phospho-D-glucosides, including maltose-6'P and trehalose-6P. The protein is Sucrose-6-phosphate hydrolase (scrB) of Klebsiella pneumoniae.